The following is a 118-amino-acid chain: Putative pterin-4-alpha-carbinolamine dehydratase (118 aa).

It belongs to the pterin-4-alpha-carbinolamine dehydratase family.

It catalyses the reaction (4aS,6R)-4a-hydroxy-L-erythro-5,6,7,8-tetrahydrobiopterin = (6R)-L-erythro-6,7-dihydrobiopterin + H2O. In Xanthomonas campestris pv. campestris (strain 8004), this protein is Putative pterin-4-alpha-carbinolamine dehydratase.